A 48-amino-acid polypeptide reads, in one-letter code: Large ribosomal subunit protein bL33B (48 aa).

The protein belongs to the bacterial ribosomal protein bL33 family.

This is Large ribosomal subunit protein bL33B from Lactococcus lactis subsp. cremoris (strain MG1363).